Reading from the N-terminus, the 263-residue chain is Protein STK_14130 (263 aa).

The protein belongs to the CinA family.

This is Protein STK_14130 from Sulfurisphaera tokodaii (strain DSM 16993 / JCM 10545 / NBRC 100140 / 7) (Sulfolobus tokodaii).